Consider the following 631-residue polypeptide: ATP-dependent DNA helicase 2 subunit 1 (631 aa).

A Ku domain is found at 262-487 (FYLGPNLSMS…VEFFQKIIKK (226 aa)). Residues 550–570 (AEPHKKRAAKSTTAGASGPKM) form a disordered region.

The protein belongs to the ku70 family. As to quaternary structure, heterodimer of a 70 kDa and a 80 kDa subunit.

It localises to the nucleus. The protein localises to the chromosome. The catalysed reaction is ATP + H2O = ADP + phosphate + H(+). Functionally, single-stranded DNA-dependent ATP-dependent helicase. Involved in non-homologous end joining (NHEJ) DNA double strand break repair. Sequence-specific DNA-binding protein that has a high affinity for a 31 bp sequence in the Yp1 gene. Site-specific DNA binding to 31 bp P element inverted repeats. This Drosophila melanogaster (Fruit fly) protein is ATP-dependent DNA helicase 2 subunit 1 (Irbp).